Consider the following 621-residue polypeptide: DNA-directed RNA polymerase subunit gamma (621 aa).

Mg(2+) contacts are provided by D463, D465, and D467.

The protein belongs to the RNA polymerase beta' chain family. RpoC1 subfamily. As to quaternary structure, in cyanobacteria the RNAP catalytic core is composed of 2 alpha, 1 beta, 1 beta', 1 gamma and 1 omega subunit. When a sigma factor is associated with the core the holoenzyme is formed, which can initiate transcription. Mg(2+) serves as cofactor.

The catalysed reaction is RNA(n) + a ribonucleoside 5'-triphosphate = RNA(n+1) + diphosphate. DNA-dependent RNA polymerase catalyzes the transcription of DNA into RNA using the four ribonucleoside triphosphates as substrates. In Nostoc commune, this protein is DNA-directed RNA polymerase subunit gamma.